The chain runs to 85 residues: Thioredoxin (85 aa).

Positions 1-85 (MSKVKIELFT…ALVEAIKKRL (85 aa)) constitute a Glutaredoxin domain. An intrachain disulfide couples Cys-14 to Cys-17.

This sequence belongs to the glutaredoxin family.

The protein localises to the cytoplasm. Its function is as follows. Acts to maintain redox homeostasis; functions as a protein disulfide reductase. In Methanocaldococcus jannaschii (strain ATCC 43067 / DSM 2661 / JAL-1 / JCM 10045 / NBRC 100440) (Methanococcus jannaschii), this protein is Thioredoxin (trx).